The primary structure comprises 427 residues: Trigger factor (427 aa).

The PPIase FKBP-type domain maps to 163–248 (GDTVVIDFVG…VNEVKAKELP (86 aa)).

The protein belongs to the FKBP-type PPIase family. Tig subfamily.

It is found in the cytoplasm. The enzyme catalyses [protein]-peptidylproline (omega=180) = [protein]-peptidylproline (omega=0). Involved in protein export. Acts as a chaperone by maintaining the newly synthesized protein in an open conformation. Functions as a peptidyl-prolyl cis-trans isomerase. The polypeptide is Trigger factor (Lactococcus lactis subsp. cremoris (strain MG1363)).